The primary structure comprises 754 residues: 5-methyltetrahydropteroyltriglutamate--homocysteine methyltransferase (754 aa).

5-methyltetrahydropteroyltri-L-glutamate contacts are provided by residues 17 to 20 (RELK) and Lys117. Residues 431–433 (IGS) and Glu484 contribute to the L-homocysteine site. L-methionine-binding positions include 431-433 (IGS) and Glu484. 5-methyltetrahydropteroyltri-L-glutamate-binding positions include 515–516 (RC) and Trp561. L-homocysteine is bound at residue Asp599. Asp599 contacts L-methionine. Glu605 contributes to the 5-methyltetrahydropteroyltri-L-glutamate binding site. Residues His641, Cys643, and Glu665 each coordinate Zn(2+). His694 functions as the Proton donor in the catalytic mechanism. Cys726 serves as a coordination point for Zn(2+).

Belongs to the vitamin-B12 independent methionine synthase family. Zn(2+) serves as cofactor.

The catalysed reaction is 5-methyltetrahydropteroyltri-L-glutamate + L-homocysteine = tetrahydropteroyltri-L-glutamate + L-methionine. Its pathway is amino-acid biosynthesis; L-methionine biosynthesis via de novo pathway; L-methionine from L-homocysteine (MetE route): step 1/1. Catalyzes the transfer of a methyl group from 5-methyltetrahydrofolate to homocysteine resulting in methionine formation. This chain is 5-methyltetrahydropteroyltriglutamate--homocysteine methyltransferase, found in Salmonella dublin (strain CT_02021853).